The following is a 359-amino-acid chain: Endosome-associated-trafficking regulator 1 (359 aa).

Phosphoserine occurs at positions 18 and 74. Residues L100–S125 form a required for interaction with PTPN13 region. The tract at residues S153–G180 is disordered. Residues L159 to A174 are compositionally biased toward polar residues. A phosphoserine mark is found at S167 and S171. A coiled-coil region spans residues D185–S295.

This sequence belongs to the ENTR1 family. In terms of assembly, found in a complex with ENTR1, PTPN13 and GIT1. Interacts with PTPN13 (via the FERM domain). Interacts (via N-terminus) with GIT1 (via N- and C-terminus); this interaction is direct. Interacts with NOD2. Interacts (via N-terminus) with IFT88. Interacts with VPS35. Phosphorylated.

The protein localises to the cytoplasm. Its subcellular location is the early endosome. It localises to the endosome. It is found in the recycling endosome. The protein resides in the midbody. The protein localises to the cytoskeleton. Its subcellular location is the microtubule organizing center. It localises to the centrosome. It is found in the cilium basal body. Endosome-associated protein that plays a role in membrane receptor sorting, cytokinesis and ciliogenesis. Involved in the endosome-to-plasma membrane trafficking and recycling of SNX27-retromer-dependent cargo proteins, such as GLUT1. Involved in the regulation of cytokinesis; the function may involve PTPN13 and GIT1. Plays a role in the formation of cilia. Involved in cargo protein localization, such as PKD2, at primary cilia. Involved in the presentation of the tumor necrosis factor (TNF) receptor TNFRSF1A on the cell surface, and hence in the modulation of the TNF-induced apoptosis. The sequence is that of Endosome-associated-trafficking regulator 1 from Bos taurus (Bovine).